The sequence spans 92 residues: MANHKSALKRIRQSAKRTVANRIDKARMRTFAKKVLAAVEAGDVELAQQTLRDATSVISRTAQRGVIHTNQASRRIARLNSHVKKLAVAAAS.

This sequence belongs to the bacterial ribosomal protein bS20 family.

Its function is as follows. Binds directly to 16S ribosomal RNA. In Magnetococcus marinus (strain ATCC BAA-1437 / JCM 17883 / MC-1), this protein is Small ribosomal subunit protein bS20.